Consider the following 299-residue polypeptide: Protease HtpX homolog (299 aa).

2 helical membrane passes run 15-35 and 39-59; these read ILLL…GYLF and GLGG…SMIF. His-143 lines the Zn(2+) pocket. Residue Glu-144 is part of the active site. Residue His-147 coordinates Zn(2+). 2 consecutive transmembrane segments (helical) span residues 158–178 and 198–218; these read IAVA…RMMW and IIML…ATLV. Glu-227 contacts Zn(2+).

It belongs to the peptidase M48B family. Requires Zn(2+) as cofactor.

It is found in the cell membrane. This is Protease HtpX homolog from Streptococcus pneumoniae (strain P1031).